The following is an 815-amino-acid chain: Probable AMP deaminase (815 aa).

Residues 5 to 27 traverse the membrane as a helical segment; the sequence is YALHLAVATLLGASFAAASAYYM. 2 disordered regions span residues 53–116 and 144–173; these read LLDA…PVPT and LLTN…STNM. Over residues 105 to 116 the composition is skewed to low complexity; sequence VRPTTPRSPVPT. Residues 159-173 are compositionally biased toward polar residues; it reads ASQNGDTKPVPSTNM. Residues histidine 367 and histidine 369 each coordinate Zn(2+). Substrate-binding positions include histidine 369 and 438-443; that span reads KFNLKY. Histidine 635 is a Zn(2+) binding site. Substrate is bound at residue glutamate 638. The active-site Proton acceptor is histidine 657. Aspartate 712 is a binding site for Zn(2+). 713 to 716 contacts substrate; sequence DPLQ.

It belongs to the metallo-dependent hydrolases superfamily. Adenosine and AMP deaminases family. In terms of assembly, homodimer. Zn(2+) is required as a cofactor.

Its subcellular location is the membrane. It carries out the reaction AMP + H2O + H(+) = IMP + NH4(+). The protein operates within purine metabolism; IMP biosynthesis via salvage pathway; IMP from AMP: step 1/1. In terms of biological role, AMP deaminase plays a critical role in energy metabolism. This is Probable AMP deaminase (AMPD) from Oryza sativa subsp. japonica (Rice).